The following is a 239-amino-acid chain: dITP/XTP pyrophosphatase (239 aa).

7-12 (THNEGK) serves as a coordination point for substrate. Residue aspartate 74 is the Proton acceptor of the active site. Residue aspartate 74 participates in Mg(2+) binding. Substrate contacts are provided by residues serine 75, 182 to 185 (FGYD), lysine 214, and 219 to 220 (HR).

The protein belongs to the HAM1 NTPase family. As to quaternary structure, homodimer. Requires Mg(2+) as cofactor.

It carries out the reaction XTP + H2O = XMP + diphosphate + H(+). It catalyses the reaction dITP + H2O = dIMP + diphosphate + H(+). The enzyme catalyses ITP + H2O = IMP + diphosphate + H(+). In terms of biological role, pyrophosphatase that catalyzes the hydrolysis of nucleoside triphosphates to their monophosphate derivatives, with a high preference for the non-canonical purine nucleotides XTP (xanthosine triphosphate), dITP (deoxyinosine triphosphate) and ITP. Seems to function as a house-cleaning enzyme that removes non-canonical purine nucleotides from the nucleotide pool, thus preventing their incorporation into DNA/RNA and avoiding chromosomal lesions. The sequence is that of dITP/XTP pyrophosphatase from Bifidobacterium animalis subsp. lactis (strain AD011).